Here is a 100-residue protein sequence, read N- to C-terminus: Small ribosomal subunit protein uS14c (100 aa).

This sequence belongs to the universal ribosomal protein uS14 family. Part of the 30S ribosomal subunit.

The protein resides in the plastid. The protein localises to the chloroplast. In terms of biological role, binds 16S rRNA, required for the assembly of 30S particles. The sequence is that of Small ribosomal subunit protein uS14c from Capsella bursa-pastoris (Shepherd's purse).